The chain runs to 181 residues: Large ribosomal subunit protein uL5 (181 aa).

Belongs to the universal ribosomal protein uL5 family. As to quaternary structure, part of the 50S ribosomal subunit; part of the 5S rRNA/L5/L18/L25 subcomplex. Contacts the 5S rRNA and the P site tRNA. Forms a bridge to the 30S subunit in the 70S ribosome.

This is one of the proteins that bind and probably mediate the attachment of the 5S RNA into the large ribosomal subunit, where it forms part of the central protuberance. In the 70S ribosome it contacts protein S13 of the 30S subunit (bridge B1b), connecting the 2 subunits; this bridge is implicated in subunit movement. Contacts the P site tRNA; the 5S rRNA and some of its associated proteins might help stabilize positioning of ribosome-bound tRNAs. The sequence is that of Large ribosomal subunit protein uL5 from Campylobacter lari (strain RM2100 / D67 / ATCC BAA-1060).